The primary structure comprises 757 residues: 5-methyltetrahydropteroyltriglutamate--homocysteine methyltransferase (757 aa).

5-methyltetrahydropteroyltri-L-glutamate is bound by residues 17-20 (RELK) and Lys-117. L-homocysteine is bound by residues 434–436 (IGS) and Glu-487. Residues 434-436 (IGS) and Glu-487 contribute to the L-methionine site. 5-methyltetrahydropteroyltri-L-glutamate contacts are provided by residues 518 to 519 (RC) and Trp-564. Asp-602 contacts L-homocysteine. Asp-602 is a binding site for L-methionine. Glu-608 contacts 5-methyltetrahydropteroyltri-L-glutamate. 3 residues coordinate Zn(2+): His-644, Cys-646, and Glu-668. His-697 functions as the Proton donor in the catalytic mechanism. Residue Cys-729 coordinates Zn(2+).

The protein belongs to the vitamin-B12 independent methionine synthase family. The cofactor is Zn(2+).

The enzyme catalyses 5-methyltetrahydropteroyltri-L-glutamate + L-homocysteine = tetrahydropteroyltri-L-glutamate + L-methionine. The protein operates within amino-acid biosynthesis; L-methionine biosynthesis via de novo pathway; L-methionine from L-homocysteine (MetE route): step 1/1. In terms of biological role, catalyzes the transfer of a methyl group from 5-methyltetrahydrofolate to homocysteine resulting in methionine formation. In Proteus mirabilis (strain HI4320), this protein is 5-methyltetrahydropteroyltriglutamate--homocysteine methyltransferase.